Reading from the N-terminus, the 317-residue chain is Tyrosine--tRNA ligase (317 aa).

Residue tyrosine 33 participates in L-tyrosine binding. Positions 38-46 match the 'HIGH' region motif; the sequence is PSGKIHMGH. Positions 155, 159, 162, and 177 each coordinate L-tyrosine. The short motif at 211 to 215 is the 'KMSKS' region element; that stretch reads KMASS. Serine 214 contributes to the ATP binding site.

It belongs to the class-I aminoacyl-tRNA synthetase family. TyrS type 3 subfamily. Homodimer.

The protein localises to the cytoplasm. It catalyses the reaction tRNA(Tyr) + L-tyrosine + ATP = L-tyrosyl-tRNA(Tyr) + AMP + diphosphate + H(+). In terms of biological role, catalyzes the attachment of tyrosine to tRNA(Tyr) in a two-step reaction: tyrosine is first activated by ATP to form Tyr-AMP and then transferred to the acceptor end of tRNA(Tyr). The sequence is that of Tyrosine--tRNA ligase from Methanosarcina barkeri (strain Fusaro / DSM 804).